Reading from the N-terminus, the 876-residue chain is Senescence-induced receptor-like serine/threonine-protein kinase (876 aa).

An N-terminal signal peptide occupies residues 1-24 (MAMLKSLSSILFTSFALLFFLVHA). Over 25–517 (QDQSGFISID…SNTKKKNKNG (493 aa)) the chain is Extracellular. 3 LRR repeats span residues 415–438 (RVVSLNISFSELRGQIDPAFSNLT), 439–462 (SIRKLDLSGNTLTGEIPAFLANLP), and 463–483 (NLTELNVEGNKLTGIVPQRLH). Residues 518-538 (YIIPLVVVGIIVVLLTALALF) traverse the membrane as a helical segment. Topologically, residues 539–876 (RRFKKKQQRG…LDTEMVPRAR (338 aa)) are cytoplasmic. The region spanning 574–847 (NNFERVIGKG…VVMELKQIVY (274 aa)) is the Protein kinase domain. ATP contacts are provided by residues 580-588 (IGKGGFGKV) and lysine 601. The residue at position 646 (tyrosine 646) is a Phosphotyrosine. The active-site Proton acceptor is aspartate 697. Position 731 is a phosphoserine (serine 731). Position 732 is a phosphothreonine (threonine 732). Tyrosine 745 is subject to Phosphotyrosine.

Belongs to the protein kinase superfamily. Ser/Thr protein kinase family.

It localises to the membrane. Its function is as follows. Involved in innate immune response of plants. The polypeptide is Senescence-induced receptor-like serine/threonine-protein kinase (SIRK) (Arabidopsis thaliana (Mouse-ear cress)).